A 593-amino-acid polypeptide reads, in one-letter code: UvrABC system protein C (593 aa).

The 78-residue stretch at 17–94 folds into the GIY-YIG domain; it reads MEPGCYLMKD…IKQYQPRYNI (78 aa). The UVR domain maps to 199 to 234; the sequence is KTILKSLEERMLTASESLDFERAKEYRDLIQHIQNL.

It belongs to the UvrC family. In terms of assembly, interacts with UvrB in an incision complex.

The protein localises to the cytoplasm. In terms of biological role, the UvrABC repair system catalyzes the recognition and processing of DNA lesions. UvrC both incises the 5' and 3' sides of the lesion. The N-terminal half is responsible for the 3' incision and the C-terminal half is responsible for the 5' incision. This Staphylococcus aureus (strain Mu3 / ATCC 700698) protein is UvrABC system protein C.